A 193-amino-acid chain; its full sequence is Potassium-transporting ATPase KdpC subunit (193 aa).

Residues 7–27 form a helical membrane-spanning segment; the sequence is PLIVVFVVLVAVTGLAYPAVM.

This sequence belongs to the KdpC family. In terms of assembly, the system is composed of three essential subunits: KdpA, KdpB and KdpC.

It is found in the cell inner membrane. Part of the high-affinity ATP-driven potassium transport (or Kdp) system, which catalyzes the hydrolysis of ATP coupled with the electrogenic transport of potassium into the cytoplasm. This subunit acts as a catalytic chaperone that increases the ATP-binding affinity of the ATP-hydrolyzing subunit KdpB by the formation of a transient KdpB/KdpC/ATP ternary complex. The sequence is that of Potassium-transporting ATPase KdpC subunit from Burkholderia mallei (strain NCTC 10247).